The sequence spans 482 residues: C3a anaphylatoxin chemotactic receptor (482 aa).

Over 1-23 the chain is Extracellular; the sequence is MASFSAETNSTDLLSQPWNEPPV. N-linked (GlcNAc...) asparagine glycosylation is present at asparagine 9. The chain crosses the membrane as a helical span at residues 24-46; sequence ILSMVILSLTFLLGLPGNGLVLW. Topologically, residues 47 to 57 are cytoplasmic; that stretch reads VAGLKMQRTVN. A helical transmembrane segment spans residues 58 to 80; sequence TIWFLHLTLADLLCCLSLPFSLA. Topologically, residues 81–96 are extracellular; sequence HLALQGQWPYGRFLCK. A disulfide bridge links cysteine 95 with cysteine 172. Residues 97–118 traverse the membrane as a helical segment; the sequence is LIPSIIVLNMFASVFLLTAISL. Residues 119–139 are Cytoplasmic-facing; that stretch reads DRCLVVFKPIWCQNHRNVGMA. A helical transmembrane segment spans residues 140 to 160; the sequence is CSICGCIWVVAFVMCIPVFVY. The Extracellular segment spans residues 161–340; it reads REIFTTDNHN…TPLVAITITR (180 aa). Residues tyrosine 174 and tyrosine 184 each carry the sulfotyrosine modification. N-linked (GlcNAc...) asparagine glycosylation is present at asparagine 194. O-linked (GalNAc...) serine glycosylation is present at serine 266. Tyrosine 318 is modified (sulfotyrosine). Residues 341-360 form a helical membrane-spanning segment; the sequence is LVVGFLLPSVIMIACYSFIV. Residues 361–377 lie on the Cytoplasmic side of the membrane; it reads FRMQRGRFAKSQSKTFR. A helical transmembrane segment spans residues 378-400; that stretch reads VAVVVVAVFLVCWTPYHIFGVLS. Topologically, residues 401 to 417 are extracellular; that stretch reads LLTDPETPLGKTLMSWD. The chain crosses the membrane as a helical span at residues 418 to 438; sequence HVCIALASANSCFNPFLYALL. Residues 439 to 482 lie on the Cytoplasmic side of the membrane; that stretch reads GKDFRKKARQSIQGILEAAFSEELTRSTHCPSNNVISERNSTTV. The residue at position 459 (serine 459) is a Phosphoserine. Phosphothreonine is present on threonine 463.

The protein belongs to the G-protein coupled receptor 1 family. As to quaternary structure, interacts with VGF-derived peptide TLQP-21. Post-translationally, among the sulfation sites Tyr-174 is essential for binding of C3a anaphylatoxin. In terms of processing, O-glycosylated. Widely expressed in several differentiated hematopoietic cell lines, in the lung, spleen, ovary, placenta, small intestine, throughout the brain, heart, and endothelial cells. Mostly expressed in lymphoid tissues.

The protein resides in the cell membrane. Functionally, receptor for the chemotactic and inflammatory peptide anaphylatoxin C3a. This receptor stimulates chemotaxis, granule enzyme release and superoxide anion production. The sequence is that of C3a anaphylatoxin chemotactic receptor (C3AR1) from Homo sapiens (Human).